The following is a 354-amino-acid chain: Methylthioribose-1-phosphate isomerase (354 aa).

Substrate contacts are provided by residues 58 to 60 (RGA), arginine 101, and glutamine 204. Catalysis depends on aspartate 245, which acts as the Proton donor. A substrate-binding site is contributed by 255-256 (NK).

The protein belongs to the eIF-2B alpha/beta/delta subunits family. MtnA subfamily.

The catalysed reaction is 5-(methylsulfanyl)-alpha-D-ribose 1-phosphate = 5-(methylsulfanyl)-D-ribulose 1-phosphate. Its pathway is amino-acid biosynthesis; L-methionine biosynthesis via salvage pathway; L-methionine from S-methyl-5-thio-alpha-D-ribose 1-phosphate: step 1/6. Its function is as follows. Catalyzes the interconversion of methylthioribose-1-phosphate (MTR-1-P) into methylthioribulose-1-phosphate (MTRu-1-P). The sequence is that of Methylthioribose-1-phosphate isomerase from Stenotrophomonas maltophilia (strain R551-3).